A 219-amino-acid polypeptide reads, in one-letter code: Small ribosomal subunit protein uS3c (219 aa).

Residues 47-118 form the KH type-2 domain; sequence IKKNIRISSG…KINIAITRIT (72 aa).

This sequence belongs to the universal ribosomal protein uS3 family. In terms of assembly, part of the 30S ribosomal subunit.

Its subcellular location is the plastid. The protein localises to the chloroplast. This chain is Small ribosomal subunit protein uS3c (rps3), found in Citrus sinensis (Sweet orange).